Reading from the N-terminus, the 338-residue chain is Calcium uniporter protein 4, mitochondrial (338 aa).

The N-terminal 36 residues, 1–36 (MVMMKKLLSNRLFNMSKTASQSLMNCRTSSSSSLAM), are a transit peptide targeting the mitochondrion. A helical membrane pass occupies residues 233-253 (LWAGLGYLIIQTAGFMRLTFW). The Selectivity filter signature appears at 257 to 265 (WDVMEPICF). Ca(2+) is bound at residue Glu261. The chain crosses the membrane as a helical span at residues 263-280 (ICFYVSSVYFMAGYTFFL).

The protein belongs to the MCU (TC 1.A.77) family.

Its subcellular location is the mitochondrion inner membrane. The enzyme catalyses Ca(2+)(in) = Ca(2+)(out). Functionally, mitochondrial inner membrane calcium uniporter that mediates calcium uptake into mitochondria. Constitutes a pore-forming and calcium-conducting subunit. Mitochondrial calcium homeostasis plays key roles in cellular physiology and regulates cell bioenergetics, cytoplasmic calcium signals and activation of cell death pathways. This Arabidopsis thaliana (Mouse-ear cress) protein is Calcium uniporter protein 4, mitochondrial.